An 832-amino-acid polypeptide reads, in one-letter code: Translation initiation factor IF-2 (832 aa).

Residues M1–E244 are disordered. The segment covering T18–H27 has biased composition (polar residues). The segment covering K81–A141 has biased composition (basic and acidic residues). The span at S142 to A171 shows a compositional bias: low complexity. 2 stretches are compositionally biased toward basic and acidic residues: residues P178 to R201 and R227 to E244. The tr-type G domain maps to P329–E497. The segment at G338–T345 is G1. G338–T345 is a GTP binding site. A G2 region spans residues G363–H367. The interval D385–G388 is G3. GTP contacts are provided by residues D385 to H389 and N439 to D442. The interval N439 to D442 is G4. Residues S475 to I477 are G5.

Belongs to the TRAFAC class translation factor GTPase superfamily. Classic translation factor GTPase family. IF-2 subfamily.

Its subcellular location is the cytoplasm. One of the essential components for the initiation of protein synthesis. Protects formylmethionyl-tRNA from spontaneous hydrolysis and promotes its binding to the 30S ribosomal subunits. Also involved in the hydrolysis of GTP during the formation of the 70S ribosomal complex. The polypeptide is Translation initiation factor IF-2 (Dinoroseobacter shibae (strain DSM 16493 / NCIMB 14021 / DFL 12)).